A 39-amino-acid chain; its full sequence is Cytochrome b559 subunit beta (39 aa).

A helical membrane pass occupies residues 14-30; the sequence is WLAIHGLAVPTVFFLGS. His-18 contributes to the heme binding site.

Belongs to the PsbE/PsbF family. In terms of assembly, heterodimer of an alpha subunit and a beta subunit. PSII is composed of 1 copy each of membrane proteins PsbA, PsbB, PsbC, PsbD, PsbE, PsbF, PsbH, PsbI, PsbJ, PsbK, PsbL, PsbM, PsbT, PsbX, PsbY, PsbZ, Psb30/Ycf12, at least 3 peripheral proteins of the oxygen-evolving complex and a large number of cofactors. It forms dimeric complexes. Requires heme b as cofactor.

The protein resides in the plastid. It localises to the chloroplast thylakoid membrane. This b-type cytochrome is tightly associated with the reaction center of photosystem II (PSII). PSII is a light-driven water:plastoquinone oxidoreductase that uses light energy to abstract electrons from H(2)O, generating O(2) and a proton gradient subsequently used for ATP formation. It consists of a core antenna complex that captures photons, and an electron transfer chain that converts photonic excitation into a charge separation. The sequence is that of Cytochrome b559 subunit beta from Psilotum nudum (Whisk fern).